The sequence spans 173 residues: NADH-ubiquinone oxidoreductase chain 6 (173 aa).

6 helical membrane passes run 1–21 (MTYF…AVAS), 27–47 (YGVV…LSLG), 48–68 (VSFV…VVFV), 85–105 (WGVV…LIVG), 106–126 (GSIG…MFSV), and 139–159 (CGVG…FVVL).

This sequence belongs to the complex I subunit 6 family.

It localises to the mitochondrion membrane. It carries out the reaction a ubiquinone + NADH + 5 H(+)(in) = a ubiquinol + NAD(+) + 4 H(+)(out). In terms of biological role, core subunit of the mitochondrial membrane respiratory chain NADH dehydrogenase (Complex I) that is believed to belong to the minimal assembly required for catalysis. Complex I functions in the transfer of electrons from NADH to the respiratory chain. The immediate electron acceptor for the enzyme is believed to be ubiquinone. This chain is NADH-ubiquinone oxidoreductase chain 6 (MT-ND6), found in Aethia psittacula (Parakeet auklet).